A 420-amino-acid polypeptide reads, in one-letter code: Probable acetate kinase (420 aa).

Asparagine 10 contributes to the Mg(2+) binding site. Lysine 17 serves as a coordination point for ATP. Arginine 97 provides a ligand contact to substrate. The Proton donor/acceptor role is filled by aspartate 153. Histidine 213–glycine 217 lines the ATP pocket. Glutamate 403 is a binding site for Mg(2+).

Belongs to the acetokinase family. Mg(2+) is required as a cofactor.

It carries out the reaction acetate + ATP = acetyl phosphate + ADP. It functions in the pathway metabolic intermediate biosynthesis; acetyl-CoA biosynthesis; acetyl-CoA from acetate: step 1/2. The polypeptide is Probable acetate kinase (Emericella nidulans (strain FGSC A4 / ATCC 38163 / CBS 112.46 / NRRL 194 / M139) (Aspergillus nidulans)).